The primary structure comprises 216 residues: Acyl-homoserine-lactone synthase (216 aa).

This sequence belongs to the autoinducer synthase family.

It catalyses the reaction a fatty acyl-[ACP] + S-adenosyl-L-methionine = an N-acyl-L-homoserine lactone + S-methyl-5'-thioadenosine + holo-[ACP] + H(+). Required for the synthesis of OHHL (N-(3-oxohexanoyl)-L-homoserine lactone), an autoinducer molecule which binds to a yet uncharacterized transcriptional regulator. The chain is Acyl-homoserine-lactone synthase (eagI) from Enterobacter agglomerans (Erwinia herbicola).